Here is an 850-residue protein sequence, read N- to C-terminus: Pentatricopeptide repeat-containing protein At3g49170, chloroplastic (850 aa).

The transit peptide at 1–50 (MAMISFSFPSPAKLPIKSQPSVSNRINVADRLILRHLNAGDLRGAVSALD) directs the protein to the chloroplast. PPR repeat units follow at residues 61 to 95 (DSVTFSSLLKSCIRARDFRLGKLVHARLIEFDIEP), 96 to 130 (DSVLYNSLISLYSKSGDSAKAEDVFETMRRFGKRD), 131 to 164 (VVSWSAMMACYGNNGRELDAIKVFVEFLELGLVP), 165 to 199 (NDYCYTAVIRACSNSDFVGVGRVTLGFLMKTGHFE), 201 to 232 (DVCVGCSLIDMFVKGENSFENAYKVFDKMSEL), 233 to 267 (NVVTWTLMITRCMQMGFPREAIRFFLDMVLSGFES), 268 to 302 (DKFTLSSVFSACAELENLSLGKQLHSWAIRSGLVD), 303 to 334 (DVECSLVDMYAKCSADGSVDDCRKVFDRMEDH), 335 to 370 (SVMSWTALITGYMKNCNLATEAINLFSEMITQGHVE), 372 to 406 (NHFTFSSAFKACGNLSDPRVGKQVLGQAFKRGLAS), 407 to 437 (NSSVANSVISMFVKSDRMEDAQRAFESLSEK), 438 to 472 (NLVSYNTFLDGTCRNLNFEQAFKLLSEITERELGV), 473 to 507 (SAFTFASLLSGVANVGSIRKGEQIHSQVVKLGLSC), 508 to 538 (NQPVCNALISMYSKCGSIDTASRVFNFMENR), 539 to 573 (NVISWTSMITGFAKHGFAIRVLETFNQMIEEGVKP), 574 to 609 (NEVTYVAILSACSHVGLVSEGWRHFNSMYEDHKIKP), and 610 to 640 (KMEHYACMVDLLCRAGLLTDAFEFINTMPFQ). A type E motif region spans residues 645–720 (VWRTFLGACR…EGGCSWIEVG (76 aa)). A type E(+) motif region spans residues 721–751 (DKIHKFYVGDTAHPNAHQIYDELDRLITEIK). The type DYW motif stretch occupies residues 752–850 (RCGYVPDTDL…DGKCSCNDYW (99 aa)).

Belongs to the PPR family. PCMP-H subfamily.

It localises to the plastid. Its subcellular location is the chloroplast. In terms of biological role, may play a role in embryogenesis. This is Pentatricopeptide repeat-containing protein At3g49170, chloroplastic (EMB2261) from Arabidopsis thaliana (Mouse-ear cress).